We begin with the raw amino-acid sequence, 518 residues long: Probable inorganic carbon transporter subunit DabB (518 aa).

Transmembrane regions (helical) follow at residues 3–23 (MQWVGASMMLLIPVLFFLGSL), 37–57 (ISLLGLFLSMFLGIAVYFEWV), 65–85 (WVGVSKMSLVMLGLVCFIAFV), 114–134 (CVVTVIISNHMLVLMVAWIAI), 165–185 (AEACLLGAILILYYEHGTWFI), 207–227 (MLLALAALVKCAQLPLHGWLI), 242–262 (AGIINLGGYLLIIFAPLIVLS), 264–284 (MAQWILLIVGGITTVLAALVM), 302–322 (MGLMLVECALGLFELALLHLV), 358–378 (WWFAGIMSAAMVVGLIWLADL), 379–399 (SGPYSPWLLFAIAVTLLIAER), 403–423 (LTSSSVIGMVGLGVVLLVVYT), and 442–462 (WKGDLWIGFLLVMFMVGYFLL).

Belongs to the inorganic carbon transporter (TC 9.A.2) DabB family. In terms of assembly, forms a complex with DabA.

It localises to the cell inner membrane. Its activity is regulated as follows. Intracellular DIC accumulation is sensitive to CCCP (carbonyl cyanide-m-chlorophenylhydrazone) and DCCD (N,N-dicyclohexylcarbodiimide) and therefore likely driven by either proton gradient, ATP, or both. Its function is as follows. Part of an energy-coupled inorganic carbon pump involved in transport of dissolved inorganic carbon (DIC) with downstream gene dabA (Tcr_0854); has been suggested to be a proton-DIC symporter. In Hydrogenovibrio crunogenus (strain DSM 25203 / XCL-2) (Thiomicrospira crunogena), this protein is Probable inorganic carbon transporter subunit DabB.